A 209-amino-acid chain; its full sequence is Molybdenum cofactor guanylyltransferase (209 aa).

Residues 13–15, Lys26, Asn54, Asp72, and Asp107 contribute to the GTP site; that span reads LAG. Asp107 is a binding site for Mg(2+).

Belongs to the MobA family. As to quaternary structure, monomer. It depends on Mg(2+) as a cofactor.

The protein resides in the cytoplasm. The catalysed reaction is Mo-molybdopterin + GTP + H(+) = Mo-molybdopterin guanine dinucleotide + diphosphate. Transfers a GMP moiety from GTP to Mo-molybdopterin (Mo-MPT) cofactor (Moco or molybdenum cofactor) to form Mo-molybdopterin guanine dinucleotide (Mo-MGD) cofactor. The sequence is that of Molybdenum cofactor guanylyltransferase from Nitrobacter hamburgensis (strain DSM 10229 / NCIMB 13809 / X14).